The following is a 656-amino-acid chain: UvrABC system protein B (656 aa).

Positions 23–180 (EGIKKGYRFQ…QHLAKIGYER (158 aa)) constitute a Helicase ATP-binding domain. 36–43 (GVTGSGKT) contacts ATP. The short motif at 89 to 112 (YYDYYQPEAYVPTKDLYIEKNADI) is the Beta-hairpin element. Residues 426-588 (QVDDLISEIK…ITPKTIVKPL (163 aa)) form the Helicase C-terminal domain. The region spanning 614–649 (EEYLSLLEEEMYRAASELRYEDAAKLRDEIFRLREE) is the UVR domain.

Belongs to the UvrB family. As to quaternary structure, forms a heterotetramer with UvrA during the search for lesions. Interacts with UvrC in an incision complex.

Its subcellular location is the cytoplasm. The UvrABC repair system catalyzes the recognition and processing of DNA lesions. A damage recognition complex composed of 2 UvrA and 2 UvrB subunits scans DNA for abnormalities. Upon binding of the UvrA(2)B(2) complex to a putative damaged site, the DNA wraps around one UvrB monomer. DNA wrap is dependent on ATP binding by UvrB and probably causes local melting of the DNA helix, facilitating insertion of UvrB beta-hairpin between the DNA strands. Then UvrB probes one DNA strand for the presence of a lesion. If a lesion is found the UvrA subunits dissociate and the UvrB-DNA preincision complex is formed. This complex is subsequently bound by UvrC and the second UvrB is released. If no lesion is found, the DNA wraps around the other UvrB subunit that will check the other stand for damage. This chain is UvrABC system protein B, found in Pseudothermotoga lettingae (strain ATCC BAA-301 / DSM 14385 / NBRC 107922 / TMO) (Thermotoga lettingae).